Here is a 266-residue protein sequence, read N- to C-terminus: 5'-nucleotidase SurE (266 aa).

Positions 8, 9, 40, and 98 each coordinate a divalent metal cation.

The protein belongs to the SurE nucleotidase family. It depends on a divalent metal cation as a cofactor.

It is found in the cytoplasm. It carries out the reaction a ribonucleoside 5'-phosphate + H2O = a ribonucleoside + phosphate. Nucleotidase that shows phosphatase activity on nucleoside 5'-monophosphates. In Parasynechococcus marenigrum (strain WH8102), this protein is 5'-nucleotidase SurE.